We begin with the raw amino-acid sequence, 584 residues long: MFS-type transporter gkaD (584 aa).

A compositionally biased stretch (low complexity) spans Met-1–Thr-11. A disordered region spans residues Met-1 to Lys-60. A glycan (N-linked (GlcNAc...) asparagine) is linked at Asn-25. A run of 8 helical transmembrane segments spans residues Phe-65–Ala-85, Leu-99–Phe-119, Trp-134–Lys-154, Gly-167–Leu-187, Met-196–Val-216, Trp-223–Leu-243, Trp-262–Ala-282, and Val-293–Ser-313. The N-linked (GlcNAc...) asparagine glycan is linked to Asn-328. The next 6 membrane-spanning stretches (helical) occupy residues Ala-334 to Val-354, Val-369 to Leu-389, Leu-398 to Ala-418, Trp-425 to Pro-445, Thr-462 to Phe-482, and Leu-536 to Leu-556.

It belongs to the major facilitator superfamily.

It localises to the membrane. Functionally, MFS-type transporter; part of the gene cluster that mediates the biosynthesis of GKK1032, fungal natural products containing a macrocyclic para-cyclophane connected to a decahydrofluorene ring system that show potent antitumor activities. This chain is MFS-type transporter gkaD, found in Penicillium citrinum.